A 135-amino-acid polypeptide reads, in one-letter code: ATP synthase epsilon chain (135 aa).

Positions D90–S103 are enriched in basic and acidic residues. Residues D90–N115 form a disordered region.

This sequence belongs to the ATPase epsilon chain family. F-type ATPases have 2 components, CF(1) - the catalytic core - and CF(0) - the membrane proton channel. CF(1) has five subunits: alpha(3), beta(3), gamma(1), delta(1), epsilon(1). CF(0) has three main subunits: a, b and c.

The protein resides in the cell membrane. Its function is as follows. Produces ATP from ADP in the presence of a proton gradient across the membrane. This Staphylococcus carnosus (strain TM300) protein is ATP synthase epsilon chain.